The sequence spans 418 residues: Serine hydroxymethyltransferase (418 aa).

(6S)-5,6,7,8-tetrahydrofolate-binding positions include leucine 120 and 124-126 (GHL). An N6-(pyridoxal phosphate)lysine modification is found at lysine 229.

The protein belongs to the SHMT family. In terms of assembly, homodimer. It depends on pyridoxal 5'-phosphate as a cofactor.

The protein localises to the cytoplasm. The enzyme catalyses (6R)-5,10-methylene-5,6,7,8-tetrahydrofolate + glycine + H2O = (6S)-5,6,7,8-tetrahydrofolate + L-serine. Its pathway is one-carbon metabolism; tetrahydrofolate interconversion. The protein operates within amino-acid biosynthesis; glycine biosynthesis; glycine from L-serine: step 1/1. Functionally, catalyzes the reversible interconversion of serine and glycine with tetrahydrofolate (THF) serving as the one-carbon carrier. This reaction serves as the major source of one-carbon groups required for the biosynthesis of purines, thymidylate, methionine, and other important biomolecules. Also exhibits THF-independent aldolase activity toward beta-hydroxyamino acids, producing glycine and aldehydes, via a retro-aldol mechanism. The chain is Serine hydroxymethyltransferase from Myxococcus xanthus (strain DK1622).